The sequence spans 460 residues: Pyruvate dehydrogenase E1 component subunit beta (460 aa).

In terms of domain architecture, Lipoyl-binding spans 2 to 78; the sequence is PVEILMPALS…KVNTPIAVLL (77 aa). At Lys43 the chain carries N6-lipoyllysine. The disordered stretch occupies residues 91 to 131; it reads KTEAPKAETPKPAAAEAPAASAAPVAAQPKADVPSDPAIPA. The span at 100-121 shows a compositional bias: low complexity; the sequence is PKPAAAEAPAASAAPVAAQPKA. Glu194 contacts thiamine diphosphate.

In terms of assembly, heterodimer of an alpha and a beta chain. (R)-lipoate is required as a cofactor. It depends on thiamine diphosphate as a cofactor.

The enzyme catalyses N(6)-[(R)-lipoyl]-L-lysyl-[protein] + pyruvate + H(+) = N(6)-[(R)-S(8)-acetyldihydrolipoyl]-L-lysyl-[protein] + CO2. In terms of biological role, the pyruvate dehydrogenase complex catalyzes the overall conversion of pyruvate to acetyl-CoA and CO(2). It contains multiple copies of three enzymatic components: pyruvate dehydrogenase (E1), dihydrolipoamide acetyltransferase (E2) and lipoamide dehydrogenase (E3). In Rhizobium meliloti (strain 1021) (Ensifer meliloti), this protein is Pyruvate dehydrogenase E1 component subunit beta (pdhB).